We begin with the raw amino-acid sequence, 329 residues long: Calponin-3 (329 aa).

Lysine 23 carries the N6-acetyllysine modification. The region spanning 26–130 (HQAEEDLRNW…TLVALAGLAK (105 aa)) is the Calponin-homology (CH) domain. Residue lysine 158 is modified to N6-methyllysine. Calponin-like repeat units lie at residues 164 to 189 (IGLQ…RHLY), 204 to 229 (ISLQ…RDIY), and 243 to 268 (ISLQ…RQVY). Residues 279–329 (PVIHNGSQGTGTNGSEISDSDYQAEYPDEYHGEYQDDYPRDYQYSDQGIDY) form a disordered region. Residues 306-318 (DEYHGEYQDDYPR) show a composition bias toward basic and acidic residues. Serine 323 is subject to Phosphoserine.

Belongs to the calponin family. As to expression, expressed in both non-smooth muscle tissues as well as smooth muscle tissues.

Thin filament-associated protein that is implicated in the regulation and modulation of smooth muscle contraction. It is capable of binding to actin, calmodulin and tropomyosin. The interaction of calponin with actin inhibits the actomyosin Mg-ATPase activity. The sequence is that of Calponin-3 (CNN3) from Homo sapiens (Human).